The primary structure comprises 77 residues: Acyl carrier protein (77 aa).

Positions Ser-2–Gln-77 constitute a Carrier domain. Ser-37 is modified (O-(pantetheine 4'-phosphoryl)serine).

It belongs to the acyl carrier protein (ACP) family. Post-translationally, 4'-phosphopantetheine is transferred from CoA to a specific serine of apo-ACP by AcpS. This modification is essential for activity because fatty acids are bound in thioester linkage to the sulfhydryl of the prosthetic group.

Its subcellular location is the cytoplasm. It functions in the pathway lipid metabolism; fatty acid biosynthesis. Its function is as follows. Carrier of the growing fatty acid chain in fatty acid biosynthesis. The sequence is that of Acyl carrier protein from Hahella chejuensis (strain KCTC 2396).